Reading from the N-terminus, the 545-residue chain is Resolvase homolog YokA (545 aa).

Residues 14 to 165 (NILGYLRRSR…GAKYTYAAQG (152 aa)) form the Resolvase/invertase-type recombinase catalytic domain. Residues 19–46 (LRRSRQDMEREKRTGEDTLTEQKELMNK) adopt a coiled-coil conformation. The active-site O-(5'-phospho-DNA)-serine intermediate is the S22. The recombinase DNA-binding region spans 173–303 (PYGYQLNKKT…VKIANKVPLL (131 aa)). Residues 402-475 (NMKTKKQMSE…QDTQSEIDSN (74 aa)) adopt a coiled-coil conformation.

This sequence in the N-terminal section; belongs to the site-specific recombinase resolvase family.

This is Resolvase homolog YokA (yokA) from Bacillus subtilis (strain 168).